The chain runs to 141 residues: Succinate dehydrogenase [ubiquinone] cytochrome b small subunit 2 (141 aa).

Residues 1–24 (MSLIRCTTSKALKFRQLLKMAART) constitute a mitochondrion transit peptide. The Mitochondrial matrix portion of the chain corresponds to 25 to 44 (SVTTPVSREPFSIEDHSLHF). A helical membrane pass occupies residues 45 to 63 (KIERYWAAGMIPLIPTAYF). Residues 64–68 (IHTPA) are Mitochondrial intermembrane-facing. Residues 69 to 89 (MDAVLTVAIVLHVHWGIAGVV) form a helical membrane-spanning segment. His80 provides a ligand contact to heme b. Topologically, residues 90–104 (SDYARPFVIGDTLAR) are mitochondrial matrix. A ubiquinone is bound at residue Tyr92. A helical membrane pass occupies residues 105-126 (VARASVYIITVILLASLLHFNN). Residues 127–141 (SDVGLTKAFEMVWSL) are Mitochondrial intermembrane-facing.

This sequence belongs to the CybS family. As to quaternary structure, component of the mitochondrial electron transport chain complex II composed of four subunits: a flavoprotein (Fp), an iron-sulfur protein (Ip), and a large cytochrome b (CybL) subunit and a small cytochrome b (CybS) subunit. There are 2 developmental stage-specific forms of complex II which have the Ip and CybL subunits in common. Complex II from the free-living larvae (aerobic environment) acts as a succinate dehydrogenase and is composed of the common subunit Ip and CybL and the stage specific subunits FpL and CybSL. Complex II from parasitic larvae and adults (anaerobic environment) acts as a fumarate reductase and is composed of the common subunit Ip and CybL and the stage specific subunits FpA and CybSA. It depends on heme b as a cofactor.

It is found in the mitochondrion inner membrane. The protein operates within carbohydrate metabolism; tricarboxylic acid cycle; fumarate from succinate (eukaryal route): step 1/1. Functionally, membrane-bound small subunit (CybS) of the mitochondrial electron transport chain complex II, which together with the membrane-bound large subunit (CybL), anchor the catalytic subunits to the inner mitochondria membrane. During the free-living egg-larvae stages, which occur in an aerobic environment, complex II acts as a succinate dehydrogenase by transferring electrons from succinate to ubiquinone. In Ascaris suum (Pig roundworm), this protein is Succinate dehydrogenase [ubiquinone] cytochrome b small subunit 2.